The following is a 546-amino-acid chain: MLLFQDLRKDIYEIVSKRFRISENDVYLDDTGHSDITIRVFRILKSPDGGENAVMEIVRSISEKDYVEKALSEGGYINVWIKRTYMLREVLESIEKSGTYPDVFQEAERVSVEHTSANPTGPLHIGRARNSIIGDSIYRILSRYGYRTVRQYFVNDSGKQMISLYTAYIKYGGPITIENLLENYQKIYREMEKDQSIEKEIEKNIERYENADPEVFGTLRKIAGVMLDGIASTLKRIGIEFDEFDWESDLLLNGSVRKAIDMLETKEEDSARYIEISGKKVFLTRKDGTTLYFARDIAYHLFKAENSEWIIDVLGEDHKDHAKSLNHVLKEMLKLENRVSFMYYSFITLETGKMSTRRGNIVTLQDLVDRTYDEALKIVNEKRPDLSEEERKKIAEVIASSAVRYSIIRVSAPKPITFRWEEALNFESNSAPFIMYSHARAASILDKAPEPEQSYGMDMPKEEADLVKAMYVYPYYLKDAAQDLKPDLIAAYLISLVQKFNDFYGACRVIGTDPLTYARRIRIVKAYKQILSDAGDLIGIKMLDQM.

Positions 117-127 (ANPTGPLHIGR) match the 'HIGH' region motif.

It belongs to the class-I aminoacyl-tRNA synthetase family.

The protein localises to the cytoplasm. It carries out the reaction tRNA(Arg) + L-arginine + ATP = L-arginyl-tRNA(Arg) + AMP + diphosphate. The protein is Arginine--tRNA ligase of Thermoplasma acidophilum (strain ATCC 25905 / DSM 1728 / JCM 9062 / NBRC 15155 / AMRC-C165).